Consider the following 220-residue polypeptide: Ribosomal RNA large subunit methyltransferase E (220 aa).

Glycine 60, tryptophan 62, aspartate 92, aspartate 108, and aspartate 133 together coordinate S-adenosyl-L-methionine. Lysine 173 functions as the Proton acceptor in the catalytic mechanism. Residues 195–220 (APRKPKASRDKSSETFILGRHLKRPR) form a disordered region.

It belongs to the class I-like SAM-binding methyltransferase superfamily. RNA methyltransferase RlmE family.

The protein resides in the cytoplasm. It carries out the reaction uridine(2552) in 23S rRNA + S-adenosyl-L-methionine = 2'-O-methyluridine(2552) in 23S rRNA + S-adenosyl-L-homocysteine + H(+). In terms of biological role, specifically methylates the uridine in position 2552 of 23S rRNA at the 2'-O position of the ribose in the fully assembled 50S ribosomal subunit. The chain is Ribosomal RNA large subunit methyltransferase E from Burkholderia lata (strain ATCC 17760 / DSM 23089 / LMG 22485 / NCIMB 9086 / R18194 / 383).